We begin with the raw amino-acid sequence, 68 residues long: Large ribosomal subunit protein uL29 (68 aa).

It belongs to the universal ribosomal protein uL29 family.

This chain is Large ribosomal subunit protein uL29 (rpl29), found in Thermoplasma acidophilum (strain ATCC 25905 / DSM 1728 / JCM 9062 / NBRC 15155 / AMRC-C165).